Consider the following 268-residue polypeptide: MCSLSAIMLLPTKLKPAYSDKRSNSSSSSSLFFNNRRSKKKNQSIVPVARLFGPAIFESSKLKVLFLGVDEKKHPSTLPRTYTLTHSDITAKLTLAISQSINNSQLQGWANRLYRDEVVAEWKKVKGKMSLHVHCHISGGHFLLDLFAKFRYFIFCKELPVVLKAFVHGDGNLLNNYPELQEALVWVYFHSNVNEFNKVECWGPLWEAVSPDGHKTETLPEARCADECSCCFPTVSSIPWSHSLSNEGVNGYSGTQTEGIATPNPEKL.

The transit peptide at 1 to 48 (MCSLSAIMLLPTKLKPAYSDKRSNSSSSSSLFFNNRRSKKKNQSIVPV) directs the protein to the chloroplast.

This sequence belongs to the staygreen family. Interacts with HCAR, the chlorophyll catabolic enzymes (CCEs) NYC1, PAO and RCCR, and the LHCII complex. Part of a SGR1-CCE-LHCII complex, which acts in chlorophyll breakdown. In terms of tissue distribution, expressed in roots, leaves, seeds, flowers, buds, petals, sepals and siliques.

The protein resides in the plastid. The protein localises to the chloroplast thylakoid membrane. It catalyses the reaction chlorophyll a + 2 H(+) = pheophytin a + Mg(2+). Functionally, magnesium chelatase involved in chlorophyll a degradation in the chlorophyll-protein complexes of photosystem I (PSI) and photosystem II (PSII). Contributes to the degradation of PSI and PSII in the thylakoid membranes. Required to trigger chlorophyll degradation during natural and dark-induced leaf senescence. Mediates chlorophyll degradation during embryo degreening. Recombinant SGR1 possesses high dechelating activity against chlorophyll a, very low activity against chlorophyllide a, and no activity against chlorophyll b. Magnesium dechelation of chlorophyll a by SGR1 activates chlorophyll b degradation by inducing the expression of NYC1, an enzyme involved in chlorophyll b degradation. The sequence is that of Magnesium dechelatase SGR1, chloroplastic from Arabidopsis thaliana (Mouse-ear cress).